Consider the following 244-residue polypeptide: tRNA (guanine-N(7)-)-methyltransferase (244 aa).

The segment covering Met-1 to Leu-11 has biased composition (pro residues). The tract at residues Met-1–Arg-23 is disordered. 4 residues coordinate S-adenosyl-L-methionine: Glu-74, Glu-99, Asp-126, and Asp-149. The active site involves Asp-149. Residues Lys-153, Asp-185, and Thr-222–Glu-225 each bind substrate.

Belongs to the class I-like SAM-binding methyltransferase superfamily. TrmB family.

It catalyses the reaction guanosine(46) in tRNA + S-adenosyl-L-methionine = N(7)-methylguanosine(46) in tRNA + S-adenosyl-L-homocysteine. The protein operates within tRNA modification; N(7)-methylguanine-tRNA biosynthesis. Functionally, catalyzes the formation of N(7)-methylguanine at position 46 (m7G46) in tRNA. This chain is tRNA (guanine-N(7)-)-methyltransferase, found in Pseudomonas syringae pv. tomato (strain ATCC BAA-871 / DC3000).